A 366-amino-acid polypeptide reads, in one-letter code: Carbamoyl phosphate synthase small chain (366 aa).

The segment at 1 to 171 (MLEKRYLVLE…KTPYVSTGSD (171 aa)) is CPSase. Positions 47, 221, and 223 each coordinate L-glutamine. The Glutamine amidotransferase type-1 domain occupies 173 to 360 (SVVLLDFGKK…IAMMKDFKEK (188 aa)). The Nucleophile role is filled by Cys248. Residues Leu249, Gln252, Asn290, Gly292, and Tyr293 each coordinate L-glutamine. Residues His333 and Glu335 contribute to the active site.

Belongs to the CarA family. In terms of assembly, composed of two chains; the small (or glutamine) chain promotes the hydrolysis of glutamine to ammonia, which is used by the large (or ammonia) chain to synthesize carbamoyl phosphate. Tetramer of heterodimers (alpha,beta)4.

The enzyme catalyses hydrogencarbonate + L-glutamine + 2 ATP + H2O = carbamoyl phosphate + L-glutamate + 2 ADP + phosphate + 2 H(+). It carries out the reaction L-glutamine + H2O = L-glutamate + NH4(+). It participates in amino-acid biosynthesis; L-arginine biosynthesis; carbamoyl phosphate from bicarbonate: step 1/1. Its pathway is pyrimidine metabolism; UMP biosynthesis via de novo pathway; (S)-dihydroorotate from bicarbonate: step 1/3. Its function is as follows. Small subunit of the glutamine-dependent carbamoyl phosphate synthetase (CPSase). CPSase catalyzes the formation of carbamoyl phosphate from the ammonia moiety of glutamine, carbonate, and phosphate donated by ATP, constituting the first step of 2 biosynthetic pathways, one leading to arginine and/or urea and the other to pyrimidine nucleotides. The small subunit (glutamine amidotransferase) binds and cleaves glutamine to supply the large subunit with the substrate ammonia. In Staphylococcus epidermidis (strain ATCC 12228 / FDA PCI 1200), this protein is Carbamoyl phosphate synthase small chain.